Reading from the N-terminus, the 188-residue chain is Thymidine kinase (188 aa).

Residue 17 to 24 (GPMFAGKT) coordinates ATP. The active-site Proton acceptor is glutamate 92. Residue phenylalanine 121 participates in substrate binding. Residues cysteine 146 and cysteine 149 each contribute to the Zn(2+) site. 166–170 (LILAG) provides a ligand contact to substrate. Residues cysteine 179 and cysteine 182 each contribute to the Zn(2+) site.

The protein belongs to the thymidine kinase family.

The catalysed reaction is thymidine + ATP = dTMP + ADP + H(+). In terms of biological role, phosphorylates thymidine. ASFV replicates in the cytoplasm of infected cells and contains genes encoding a number of enzymes needed for DNA synthesis, including thymidine kinase. Important for growth in swine macrophages in vitro and is a virus virulence factor in swine. In Ornithodoros (relapsing fever ticks), this protein is Thymidine kinase.